The sequence spans 719 residues: Phosphoribosylformylglycinamidine synthase subunit PurL (719 aa).

Residue His47 is part of the active site. ATP-binding residues include Tyr50 and Lys89. Glu91 contacts Mg(2+). Substrate is bound by residues 92–95 and Arg114; that span reads SHNH. His93 acts as the Proton acceptor in catalysis. Asp115 contacts Mg(2+). Residue Gln238 participates in substrate binding. A Mg(2+)-binding site is contributed by Asp266. 310 to 312 is a substrate binding site; sequence ESQ. ATP is bound by residues Asp488 and Gly525. Asn526 serves as a coordination point for Mg(2+). A substrate-binding site is contributed by Ser528.

Belongs to the FGAMS family. Monomer. Part of the FGAM synthase complex composed of 1 PurL, 1 PurQ and 2 PurS subunits.

It localises to the cytoplasm. It carries out the reaction N(2)-formyl-N(1)-(5-phospho-beta-D-ribosyl)glycinamide + L-glutamine + ATP + H2O = 2-formamido-N(1)-(5-O-phospho-beta-D-ribosyl)acetamidine + L-glutamate + ADP + phosphate + H(+). It participates in purine metabolism; IMP biosynthesis via de novo pathway; 5-amino-1-(5-phospho-D-ribosyl)imidazole from N(2)-formyl-N(1)-(5-phospho-D-ribosyl)glycinamide: step 1/2. Part of the phosphoribosylformylglycinamidine synthase complex involved in the purines biosynthetic pathway. Catalyzes the ATP-dependent conversion of formylglycinamide ribonucleotide (FGAR) and glutamine to yield formylglycinamidine ribonucleotide (FGAM) and glutamate. The FGAM synthase complex is composed of three subunits. PurQ produces an ammonia molecule by converting glutamine to glutamate. PurL transfers the ammonia molecule to FGAR to form FGAM in an ATP-dependent manner. PurS interacts with PurQ and PurL and is thought to assist in the transfer of the ammonia molecule from PurQ to PurL. This is Phosphoribosylformylglycinamidine synthase subunit PurL from Cereibacter sphaeroides (strain ATCC 17025 / ATH 2.4.3) (Rhodobacter sphaeroides).